We begin with the raw amino-acid sequence, 968 residues long: RNA polymerase-associated protein RapA (968 aa).

Residues 164 to 334 enclose the Helicase ATP-binding domain; that stretch reads EVGQRHAPRV…FARLRLLDPN (171 aa). Position 177–184 (177–184) interacts with ATP; that stretch reads DEVGLGKT. The DEAH box motif lies at 280–283; the sequence is DEAH. The 175-residue stretch at 490-664 folds into the Helicase C-terminal domain; it reads RVEWLLNYLV…AAPTEQEGLD (175 aa).

It belongs to the SNF2/RAD54 helicase family. RapA subfamily. Interacts with the RNAP. Has a higher affinity for the core RNAP than for the holoenzyme. Its ATPase activity is stimulated by binding to RNAP.

In terms of biological role, transcription regulator that activates transcription by stimulating RNA polymerase (RNAP) recycling in case of stress conditions such as supercoiled DNA or high salt concentrations. Probably acts by releasing the RNAP, when it is trapped or immobilized on tightly supercoiled DNA. Does not activate transcription on linear DNA. Probably not involved in DNA repair. The polypeptide is RNA polymerase-associated protein RapA (Serratia proteamaculans (strain 568)).